A 305-amino-acid chain; its full sequence is N-acetylneuraminate lyase 2 (305 aa).

Aceneuramate contacts are provided by S47 and T48. Catalysis depends on Y137, which acts as the Proton donor. K165 acts as the Schiff-base intermediate with substrate in catalysis. Residues T167, G189, D191, E192, and S208 each contribute to the aceneuramate site.

It belongs to the DapA family. NanA subfamily. In terms of assembly, homotetramer.

The protein resides in the cytoplasm. It catalyses the reaction aceneuramate = aldehydo-N-acetyl-D-mannosamine + pyruvate. It participates in amino-sugar metabolism; N-acetylneuraminate degradation; D-fructose 6-phosphate from N-acetylneuraminate: step 1/5. Functionally, catalyzes the reversible aldol cleavage of N-acetylneuraminic acid (sialic acid; Neu5Ac) to form pyruvate and N-acetylmannosamine (ManNAc) via a Schiff base intermediate. This chain is N-acetylneuraminate lyase 2, found in Escherichia coli O6:H1 (strain CFT073 / ATCC 700928 / UPEC).